A 185-amino-acid polypeptide reads, in one-letter code: Ribosome-recycling factor (185 aa).

This sequence belongs to the RRF family.

It localises to the cytoplasm. Functionally, responsible for the release of ribosomes from messenger RNA at the termination of protein biosynthesis. May increase the efficiency of translation by recycling ribosomes from one round of translation to another. This is Ribosome-recycling factor from Mannheimia succiniciproducens (strain KCTC 0769BP / MBEL55E).